Reading from the N-terminus, the 185-residue chain is Ribonuclease M5 (185 aa).

A Toprim domain is found at 4-87 (KEIIVVEGKD…AFLPKEEALA (84 aa)). Mg(2+) is bound by residues Glu10, Asp56, and Asp58.

This sequence belongs to the ribonuclease M5 family. Requires Mg(2+) as cofactor.

It localises to the cytoplasm. The enzyme catalyses Endonucleolytic cleavage of RNA, removing 21 and 42 nucleotides, respectively, from the 5'- and 3'-termini of a 5S-rRNA precursor.. Its function is as follows. Required for correct processing of both the 5' and 3' ends of 5S rRNA precursor. Cleaves both sides of a double-stranded region yielding mature 5S rRNA in one step. The sequence is that of Ribonuclease M5 from Bacillus anthracis.